Here is a 138-residue protein sequence, read N- to C-terminus: Extracellular glycoprotein lacritin (138 aa).

An N-terminal signal peptide occupies residues 1–19; the sequence is MKFTTLLFLAAVAGALVYA. Positions 20 to 79 are disordered; it reads EDASSDSTGADPAQEAGTSKPNEEISGPAEPASPPETTTTAQETSAAAVQGTAKVTSSRQ. Positions 43 to 67 are enriched in low complexity; it reads EISGPAEPASPPETTTTAQETSAAA. Asn119 carries an N-linked (GlcNAc...) asparagine glycan.

In terms of tissue distribution, expressed in secretory granules of many acinar cells in lacrimal gland and in scattered acinar cells of salivary glands.

The protein localises to the secreted. Modulates secretion by lacrimal acinar cells. The polypeptide is Extracellular glycoprotein lacritin (LACRT) (Homo sapiens (Human)).